The primary structure comprises 716 residues: DNA ligase (716 aa).

Residues 50–54, 99–100, and E132 contribute to the NAD(+) site; these read DAEYD and SL. K134 (N6-AMP-lysine intermediate) is an active-site residue. 4 residues coordinate NAD(+): R155, E192, K308, and K332. The Zn(2+) site is built by C437, C439, C461, and C467. Residues 638 to 716 enclose the BRCT domain; sequence KSNSAVAGKT…EDEWLKLIGE (79 aa).

This sequence belongs to the NAD-dependent DNA ligase family. LigA subfamily. Mg(2+) serves as cofactor. The cofactor is Mn(2+).

The catalysed reaction is NAD(+) + (deoxyribonucleotide)n-3'-hydroxyl + 5'-phospho-(deoxyribonucleotide)m = (deoxyribonucleotide)n+m + AMP + beta-nicotinamide D-nucleotide.. In terms of biological role, DNA ligase that catalyzes the formation of phosphodiester linkages between 5'-phosphoryl and 3'-hydroxyl groups in double-stranded DNA using NAD as a coenzyme and as the energy source for the reaction. It is essential for DNA replication and repair of damaged DNA. This is DNA ligase from Bradyrhizobium diazoefficiens (strain JCM 10833 / BCRC 13528 / IAM 13628 / NBRC 14792 / USDA 110).